Reading from the N-terminus, the 98-residue chain is DNA-binding protein Fis (98 aa).

A DNA-binding region (H-T-H motif) is located at residues 74-93 (QTRAATMMGINRGTLRKKLK).

The protein belongs to the transcriptional regulatory Fis family. In terms of assembly, homodimer.

In terms of biological role, activates ribosomal RNA transcription. Plays a direct role in upstream activation of rRNA promoters. The sequence is that of DNA-binding protein Fis from Vibrio atlanticus (strain LGP32) (Vibrio splendidus (strain Mel32)).